Reading from the N-terminus, the 455-residue chain is Transmembrane protease serine 5 (455 aa).

Over 1-49 the chain is Cytoplasmic; the sequence is MSPTLDDQSPMEIRCTEEGAGPGIFRMELGDQRQSISQSQRWCCLQRGC. The chain crosses the membrane as a helical; Signal-anchor for type II membrane protein span at residues 50-70; the sequence is VILGVLGLLAGAGIASWLLVL. The Extracellular segment spans residues 71–455; it reads YLWPAASPSI…DWIHDTVQVR (385 aa). Positions 112-207 constitute an SRCR domain; the sequence is FRINGEDLLL…SGRIVSLKCS (96 aa). 7 cysteine pairs are disulfide-bonded: Cys-135/Cys-196, Cys-148/Cys-206, Cys-209/Cys-328, Cys-243/Cys-259, Cys-342/Cys-411, Cys-374/Cys-390, and Cys-401/Cys-429. Asn-163 and Asn-170 each carry an N-linked (GlcNAc...) asparagine glycan. A Peptidase S1 domain is found at 218–453; sequence IVGGQAVASG…FLDWIHDTVQ (236 aa). Residues His-258 and Asp-308 each act as charge relay system in the active site. N-linked (GlcNAc...) asparagine glycans are attached at residues Asn-319 and Asn-375. The active-site Charge relay system is the Ser-405.

It belongs to the peptidase S1 family.

Its subcellular location is the cell membrane. Functionally, may play a role in hearing. The chain is Transmembrane protease serine 5 (Tmprss5) from Mus musculus (Mouse).